Consider the following 206-residue polypeptide: Ribosomal RNA small subunit methyltransferase G (206 aa).

Residues Gly73, Leu78, 124-125, and Arg139 each bind S-adenosyl-L-methionine; that span reads VE.

This sequence belongs to the methyltransferase superfamily. RNA methyltransferase RsmG family.

The protein resides in the cytoplasm. The enzyme catalyses guanosine(527) in 16S rRNA + S-adenosyl-L-methionine = N(7)-methylguanosine(527) in 16S rRNA + S-adenosyl-L-homocysteine. In terms of biological role, specifically methylates the N7 position of guanine in position 527 of 16S rRNA. In Photorhabdus laumondii subsp. laumondii (strain DSM 15139 / CIP 105565 / TT01) (Photorhabdus luminescens subsp. laumondii), this protein is Ribosomal RNA small subunit methyltransferase G.